The chain runs to 287 residues: tRNA selenocysteine 1-associated protein 1 (287 aa).

RRM domains lie at Ala-3–Tyr-86 and Tyr-96–Pro-175.

This sequence belongs to the RRM TRSPAP family. In terms of assembly, component of the tRNA(Sec) complex composed at least of EEFSEC, SECISBP2, SEPHS1, SEPSECS, TRNAU1AP and tRNA(Sec). Found in a complex with tRNA(Sec). Interacts with SEPSECS. Associates with mRNP and/or polysomes. Found in a complex with EEFSEC, SECISBP2, TRNAU1AP and tRNA(Sec).

Its subcellular location is the nucleus. It localises to the cytoplasm. In terms of biological role, involved in the early steps of selenocysteine biosynthesis and tRNA(Sec) charging to the later steps resulting in the cotranslational incorporation of selenocysteine into selenoproteins. Stabilizes the SECISBP2, EEFSEC and tRNA(Sec) complex. May be involved in the methylation of tRNA(Sec). Enhances efficiency of selenoproteins synthesis. This Bos taurus (Bovine) protein is tRNA selenocysteine 1-associated protein 1 (TRNAU1AP).